The sequence spans 380 residues: Putative zinc finger protein C02F5.12 (380 aa).

A disordered region spans residues 137-187 (NLDIPGTSSDIPSDPSSALKVPKKEVLDESEEILDQTSGSSSFSLNDSEQA). Composition is skewed to polar residues over residues 142–152 (GTSSDIPSDPS) and 171–187 (DQTS…SEQA). The segment at 271–294 (IPCKLCGFECTNVRRMRSHYAKAH) adopts a C2H2-type zinc-finger fold.

The protein localises to the nucleus. In Caenorhabditis elegans, this protein is Putative zinc finger protein C02F5.12.